A 204-amino-acid polypeptide reads, in one-letter code: MELSIVTPQGAKGTVAVSEVAFGKEFNQDLVHQAVVAYMAGSRQGTKAQKNRAAVSGGGKKPWRQKGTGRARAGTIRSPIWRSGGVTFAAQPRDFEQKLNKKMYRAALRCILSELARQERLVVVEEFDLDAPKTKILVQKLAEYDLTDALIVSEQVSENLYLAARNLHKVDVRDVQAIDPVSLIRFEKVVMTVSAVKKLEEVLA.

Residues 47 to 69 (KAQKNRAAVSGGGKKPWRQKGTG) form a disordered region.

The protein belongs to the universal ribosomal protein uL4 family. As to quaternary structure, part of the 50S ribosomal subunit.

Functionally, one of the primary rRNA binding proteins, this protein initially binds near the 5'-end of the 23S rRNA. It is important during the early stages of 50S assembly. It makes multiple contacts with different domains of the 23S rRNA in the assembled 50S subunit and ribosome. Forms part of the polypeptide exit tunnel. This chain is Large ribosomal subunit protein uL4, found in Teredinibacter turnerae (strain ATCC 39867 / T7901).